A 250-amino-acid polypeptide reads, in one-letter code: NAD(P)H-quinone oxidoreductase subunit K (250 aa).

The [4Fe-4S] cluster site is built by C60, C61, C125, and C156. The disordered stretch occupies residues 230 to 250; it reads ELNTSEIDASPASQPSSTYES. Polar residues predominate over residues 231–250; the sequence is LNTSEIDASPASQPSSTYES.

This sequence belongs to the complex I 20 kDa subunit family. As to quaternary structure, NDH-1 can be composed of about 15 different subunits; different subcomplexes with different compositions have been identified which probably have different functions. [4Fe-4S] cluster is required as a cofactor.

The protein resides in the cellular thylakoid membrane. The enzyme catalyses a plastoquinone + NADH + (n+1) H(+)(in) = a plastoquinol + NAD(+) + n H(+)(out). The catalysed reaction is a plastoquinone + NADPH + (n+1) H(+)(in) = a plastoquinol + NADP(+) + n H(+)(out). Functionally, NDH-1 shuttles electrons from an unknown electron donor, via FMN and iron-sulfur (Fe-S) centers, to quinones in the respiratory and/or the photosynthetic chain. The immediate electron acceptor for the enzyme in this species is believed to be plastoquinone. Couples the redox reaction to proton translocation, and thus conserves the redox energy in a proton gradient. Cyanobacterial NDH-1 also plays a role in inorganic carbon-concentration. This is NAD(P)H-quinone oxidoreductase subunit K from Prochlorococcus marinus (strain MIT 9303).